The sequence spans 461 residues: MMMFHNCRINNYLITSQIGEGAYGLVYRALDIRTDRQYAIKAVVQSYGVSKEADMGNDKIHKNSVKLQKKLAKLFKESKNVVRVPSIDLESIENMSEEDFKKLPHYKEISLHLRVHHHKNIVTIHEVLQSAVCTFIVMDYYPTDLFTSIVDNRHFVTNGLLVKKVFLQICSALNYCHEHGIYHCDIKPENLLLDTEDNVFLCDFGLSTTSTYIKPNVCIGSSYYMPPERISFDGRVSSSKSGGHKLGKVCPSCNGDLWSLGIILINLTCIRNPWLKADKTEDNTYYYFTKDPNILKQILPLSDDFYSLLSKILQVNPKNRMSLQELMKEVSSITSFTNEGPLSKVPPLSKSVYEKFVSPVDNTNENLSPKSYVYMHDSKAAKNLSYTSSSEEEDGIKEGIDDDNGSRSGSFGTLDTDTGLHSSFTSTSCESDNECSKISNKFSLFEKKFNELRMSSSSLTN.

One can recognise a Protein kinase domain in the interval 12 to 337; that stretch reads YLITSQIGEG…KEVSSITSFT (326 aa). ATP contacts are provided by residues 18–26 and Lys41; that span reads IGEGAYGLV. The Proton acceptor role is filled by Asp185. The tract at residues 384–433 is disordered; sequence LSYTSSSEEEDGIKEGIDDDNGSRSGSFGTLDTDTGLHSSFTSTSCESDN. A compositionally biased stretch (acidic residues) spans 390 to 403; the sequence is SEEEDGIKEGIDDD. Polar residues predominate over residues 406-433; sequence SRSGSFGTLDTDTGLHSSFTSTSCESDN.

The protein belongs to the protein kinase superfamily. Ser/Thr protein kinase family.

Its subcellular location is the cytoplasm. The enzyme catalyses L-seryl-[protein] + ATP = O-phospho-L-seryl-[protein] + ADP + H(+). The catalysed reaction is L-threonyl-[protein] + ATP = O-phospho-L-threonyl-[protein] + ADP + H(+). Probable serine/threonine protein kinase involved in the G1-S transition. The protein is Serine/threonine-protein kinase VHS1 (VHS1) of Saccharomyces cerevisiae (strain ATCC 204508 / S288c) (Baker's yeast).